A 523-amino-acid polypeptide reads, in one-letter code: Sorting nexin-2 (523 aa).

Residues 1 to 104 (MAAEREPPPL…EPSPAVTPVT (104 aa)) are disordered. Composition is skewed to low complexity over residues 27–48 (LFTS…TSLP) and 93–104 (SSEPSPAVTPVT). Ser97 is subject to Phosphoserine. Residues Thr101 and Thr104 each carry the phosphothreonine modification. Ser117 and Ser119 each carry phosphoserine. One can recognise a PX domain in the interval 140-269 (FDIEIGVSDP…QFLESSELPR (130 aa)). Residues Arg183, Ser185, Lys211, and Arg235 each contribute to the a 1,2-diacyl-sn-glycero-3-phospho-(1D-myo-inositol-3-phosphate) site. Ser185 is subject to Phosphoserine. Residues 260 to 523 (QFLESSELPR…AFLPEAKAIA (264 aa)) form an interaction with RhoG region. Residue Ser277 is modified to Phosphoserine. Positions 278–295 (GAGILRMVNKAADAVNKM) are membrane-binding amphipathic helix. Positions 299 to 523 (MNESDAWFEE…AFLPEAKAIA (225 aa)) constitute a BAR domain. Lys473 carries the N6-acetyllysine modification.

It belongs to the sorting nexin family. In terms of assembly, predominantly forms heterodimers with BAR domain-containing sorting nexins SNX5, SNX6 and SNX32; can self-associate to form homodimers. The heterodimers are proposed to self-assemble into helical arrays on the membrane to stabilize and expand local membrane curvature underlying endosomal tubule formation. Thought to be a component of the originally described retromer complex (also called SNX-BAR retromer) which is a pentamer containing the heterotrimeric retromer cargo-selective complex (CSC), also described as vacuolar protein sorting subcomplex (VPS), and a heterodimeric membrane-deforming subcomplex formed between SNX1 or SNX2 and SNX5 or SNX6 (also called SNX-BAR subcomplex); the respective CSC and SNX-BAR subcomplexes associate with low affinity. Interacts with SNX5, SNX6, SNX32, VPS26A, VPS29, VPS35, FNBP1, KALRN, RHOG (GDP-bound form).

It localises to the early endosome membrane. The protein localises to the cell projection. Its subcellular location is the lamellipodium. Its function is as follows. Involved in several stages of intracellular trafficking. Interacts with membranes containing phosphatidylinositol 3-phosphate (PtdIns(3P)) or phosphatidylinositol 3,5-bisphosphate (PtdIns(3,5)P2). Acts in part as component of the retromer membrane-deforming SNX-BAR subcomplex. The SNX-BAR retromer mediates retrograde transport of cargo proteins from endosomes to the trans-Golgi network (TGN) and is involved in endosome-to-plasma membrane transport for cargo protein recycling. The SNX-BAR subcomplex functions to deform the donor membrane into a tubular profile called endosome-to-TGN transport carrier (ETC). Can sense membrane curvature and has in vitro vesicle-to-membrane remodeling activity. Required for retrograde endosome-to-TGN transport of TGN38. Promotes KALRN- and RHOG-dependent but retromer-independent membrane remodeling such as lamellipodium formation; the function is dependent on GEF activity of KALRN. In Pongo abelii (Sumatran orangutan), this protein is Sorting nexin-2 (SNX2).